The sequence spans 228 residues: Phosphoglycolate phosphatase 1 (228 aa).

Catalysis depends on Asp-8, which acts as the Nucleophile. Mg(2+) is bound by residues Asp-8 and Asp-10. Lys-149 contacts substrate. Mg(2+)-binding residues include Asp-172 and Asp-176.

Belongs to the archaeal SPP-like hydrolase family. It depends on Mg(2+) as a cofactor.

It carries out the reaction 2-phosphoglycolate + H2O = glycolate + phosphate. Functionally, catalyzes the dephosphorylation of 2-phosphoglycolate. The chain is Phosphoglycolate phosphatase 1 from Saccharolobus solfataricus (strain ATCC 35092 / DSM 1617 / JCM 11322 / P2) (Sulfolobus solfataricus).